The primary structure comprises 338 residues: UDP-N-acetylglucosamine--N-acetylmuramyl-(pentapeptide) pyrophosphoryl-undecaprenol N-acetylglucosamine transferase (338 aa).

UDP-N-acetyl-alpha-D-glucosamine contacts are provided by residues 10 to 12, Asn-122, Ser-177, and Gln-275; that span reads TGG.

This sequence belongs to the glycosyltransferase 28 family. MurG subfamily.

It is found in the cell inner membrane. It carries out the reaction di-trans,octa-cis-undecaprenyl diphospho-N-acetyl-alpha-D-muramoyl-L-alanyl-D-glutamyl-meso-2,6-diaminopimeloyl-D-alanyl-D-alanine + UDP-N-acetyl-alpha-D-glucosamine = di-trans,octa-cis-undecaprenyl diphospho-[N-acetyl-alpha-D-glucosaminyl-(1-&gt;4)]-N-acetyl-alpha-D-muramoyl-L-alanyl-D-glutamyl-meso-2,6-diaminopimeloyl-D-alanyl-D-alanine + UDP + H(+). It functions in the pathway cell wall biogenesis; peptidoglycan biosynthesis. Its function is as follows. Cell wall formation. Catalyzes the transfer of a GlcNAc subunit on undecaprenyl-pyrophosphoryl-MurNAc-pentapeptide (lipid intermediate I) to form undecaprenyl-pyrophosphoryl-MurNAc-(pentapeptide)GlcNAc (lipid intermediate II). The protein is UDP-N-acetylglucosamine--N-acetylmuramyl-(pentapeptide) pyrophosphoryl-undecaprenol N-acetylglucosamine transferase of Sulfurovum sp. (strain NBC37-1).